An 845-amino-acid polypeptide reads, in one-letter code: Extended synaptotagmin-2 (845 aa).

The segment covering 1–17 has biased composition (gly residues); sequence MSSAGGEGPEAGPGRAG. Positions 1-26 are disordered; sequence MSSAGGEGPEAGPGRAGGRSEPEAPG. Topologically, residues 1–27 are cytoplasmic; sequence MSSAGGEGPEAGPGRAGGRSEPEAPGS. A helical membrane pass occupies residues 28–48; it reads ALSVDLPGLLGQLARSFALLL. The Lumenal segment spans residues 49-51; it reads PVY. A helical membrane pass occupies residues 52–72; sequence ALGYLGLSFSWVLLALGLLAW. Topologically, residues 73–845 are cytoplasmic; that stretch reads CRRSRGLKAS…EDGTRPQVIT (773 aa). The 180-residue stretch at 115 to 294 folds into the SMP-LTD domain; the sequence is DTERAEWLNK…LPNRITVPLV (180 aa). C2 domains lie at 293 to 413 and 442 to 563; these read LVSE…DEWF and VLAD…QLSN. Ca(2+) is bound by residues Lys324, Asp325, Asp337, Asp384, Glu385, Asp386, Asp388, Asp390, and Asp391. Positions 584-664 are disordered; that stretch reads QERPPDYQHS…RDLGRSSSSL (81 aa). A compositionally biased stretch (polar residues) spans 612-628; the sequence is SQMSASPGTGGANTAPS. Residues Ser615 and Ser617 each carry the phosphoserine modification. Phosphothreonine is present on Thr629. Residues 634–645 are compositionally biased toward basic and acidic residues; sequence VDDKPAMEEKPQ. Phosphoserine occurs at positions 660, 662, 663, 667, 679, 682, and 685. Positions 710 to 832 constitute a C2 3 domain; the sequence is PLGQIQLTIR…ELAKGWTQWY (123 aa). Residues 757-764 form a required for phosphatidylinositol 4,5-bisphosphate-dependent location at the cell membrane region; that stretch reads KRRSGRRK.

It belongs to the extended synaptotagmin family. In terms of assembly, homodimer. Interacts with ESYT1 and ESYT3. Interacts with FGFR1 that has been activated by FGF1 binding. Interacts with the AP-2 complex; identified in a complex with the AP-2 complex and FGFR1.

It localises to the cell membrane. The protein resides in the endoplasmic reticulum membrane. Functionally, tethers the endoplasmic reticulum to the cell membrane and promotes the formation of appositions between the endoplasmic reticulum and the cell membrane. Binds glycerophospholipids in a barrel-like domain and may play a role in cellular lipid transport. Plays a role in FGF signaling via its role in the rapid internalization of FGFR1 that has been activated by FGF1 binding; this occurs most likely via the AP-2 complex. Promotes the localization of SACM1L at endoplasmic reticulum-plasma membrane contact sites (EPCS). The polypeptide is Extended synaptotagmin-2 (Esyt2) (Mus musculus (Mouse)).